We begin with the raw amino-acid sequence, 165 residues long: ATP synthase subunit delta, mitochondrial (165 aa).

The transit peptide at 1 to 27 directs the protein to the mitochondrion; that stretch reads MNSLRIARAALRVRPTAVRAPLQRRGY.

The protein belongs to the ATPase epsilon chain family. In terms of assembly, F-type ATPases have 2 components, CF(1) - the catalytic core - and CF(0) - the membrane proton channel. CF(1) has five subunits: alpha(3), beta(3), gamma(1), delta(1), epsilon(1). CF(0) has three main subunits: a, b and c.

It is found in the mitochondrion. The protein resides in the mitochondrion inner membrane. Functionally, mitochondrial membrane ATP synthase (F(1)F(0) ATP synthase or Complex V) produces ATP from ADP in the presence of a proton gradient across the membrane which is generated by electron transport complexes of the respiratory chain. F-type ATPases consist of two structural domains, F(1) - containing the extramembraneous catalytic core, and F(0) - containing the membrane proton channel, linked together by a central stalk and a peripheral stalk. During catalysis, ATP turnover in the catalytic domain of F(1) is coupled via a rotary mechanism of the central stalk subunits to proton translocation. Part of the complex F(1) domain and of the central stalk which is part of the complex rotary element. Rotation of the central stalk against the surrounding alpha(3)beta(3) subunits leads to hydrolysis of ATP in three separate catalytic sites on the beta subunits. This Neurospora crassa (strain ATCC 24698 / 74-OR23-1A / CBS 708.71 / DSM 1257 / FGSC 987) protein is ATP synthase subunit delta, mitochondrial (des).